The sequence spans 267 residues: Glutamate racemase (267 aa).

Substrate-binding positions include 10 to 11 (DS) and 42 to 43 (YG). The Proton donor/acceptor role is filled by Cys73. Position 74-75 (74-75 (NT)) interacts with substrate. Cys183 functions as the Proton donor/acceptor in the catalytic mechanism. 184–185 (TH) is a binding site for substrate.

The protein belongs to the aspartate/glutamate racemases family.

It catalyses the reaction L-glutamate = D-glutamate. The protein operates within cell wall biogenesis; peptidoglycan biosynthesis. Functionally, provides the (R)-glutamate required for cell wall biosynthesis. The chain is Glutamate racemase from Lactobacillus helveticus (strain DPC 4571).